A 289-amino-acid polypeptide reads, in one-letter code: Esterase GA18864 (289 aa).

Over residues 1–19 (MTNNDAAVEAPSSSRASSS) the composition is skewed to low complexity. Residues 1–24 (MTNNDAAVEAPSSSRASSSKQQPK) are disordered. Catalysis depends on charge relay system residues Ser133, Asp191, and His218. The segment at 253–289 (VSFIESGAEDNDDDGDANDAEVAAATAAAGSDLDDSD) is disordered. The span at 259-271 (GAEDNDDDGDAND) shows a compositional bias: acidic residues. Residues 272–283 (AEVAAATAAAGS) are compositionally biased toward low complexity.

This sequence belongs to the LovG family.

The protein is Esterase GA18864 of Drosophila pseudoobscura pseudoobscura (Fruit fly).